The chain runs to 231 residues: Demethylmenaquinone methyltransferase (231 aa).

S-adenosyl-L-methionine contacts are provided by residues T62, D80, 102–103, and S119; that span reads DA.

The protein belongs to the class I-like SAM-binding methyltransferase superfamily. MenG/UbiE family.

The catalysed reaction is a 2-demethylmenaquinol + S-adenosyl-L-methionine = a menaquinol + S-adenosyl-L-homocysteine + H(+). It participates in quinol/quinone metabolism; menaquinone biosynthesis; menaquinol from 1,4-dihydroxy-2-naphthoate: step 2/2. Methyltransferase required for the conversion of demethylmenaquinol (DMKH2) to menaquinol (MKH2). In Streptomyces avermitilis (strain ATCC 31267 / DSM 46492 / JCM 5070 / NBRC 14893 / NCIMB 12804 / NRRL 8165 / MA-4680), this protein is Demethylmenaquinone methyltransferase.